We begin with the raw amino-acid sequence, 333 residues long: Eukaryotic translation initiation factor 3 subunit H-B (333 aa).

The region spanning I20–L154 is the MPN domain. The interval S249–M295 is disordered. Over residues K250–R261 the composition is skewed to low complexity.

The protein belongs to the eIF-3 subunit H family. Component of the eukaryotic translation initiation factor 3 (eIF-3) complex, which is composed of 13 subunits: eif3a, eif3b, eif3c, eif3d, eif3e, eif3f, eif3g, eif3h, eif3i, eif3j, eif3k, eif3l and eif3m.

The protein localises to the cytoplasm. Functionally, component of the eukaryotic translation initiation factor 3 (eIF-3) complex, which is involved in protein synthesis of a specialized repertoire of mRNAs and, together with other initiation factors, stimulates binding of mRNA and methionyl-tRNAi to the 40S ribosome. The eIF-3 complex specifically targets and initiates translation of a subset of mRNAs involved in cell proliferation. This Danio rerio (Zebrafish) protein is Eukaryotic translation initiation factor 3 subunit H-B (eif3hb).